Here is an 869-residue protein sequence, read N- to C-terminus: H(+)/Cl(-) exchange transporter 6 (869 aa).

Topologically, residues 1-80 (MAGCRGSLCC…KKGRWYEVVK (80 aa)) are cytoplasmic. 2 consecutive transmembrane segments (helical) span residues 81-113 (WTVVFAIGVCTGLVGLFVDFFVQLFTQLKFGVV) and 128-150 (LSLLELLGFNLTFVFLASLLVLI). The Selectivity filter part_1 signature appears at 156–160 (GSGIP). S157 provides a ligand contact to chloride. The helical intramembrane region spans 159–166 (IPEIKCYL). A run of 2 helical transmembrane segments spans residues 176–194 (RLRTLLCKVFGVLFSVAGG) and 200–217 (EGPMIHSGAVVGAGLPQF). Residues 198–202 (GKEGP) carry the Selectivity filter part_2 motif. 2 intramembrane regions (helical) span residues 241–253 (FVSAGAAAGIAAA) and 257–265 (PIGATLFSL). Transmembrane regions (helical) follow at residues 277–294 (TWKVLFCSMSATFTLNFF), 335–364 (GFFVVMGVIGGLLGATFNCLNKRLAKYRMR), and 371–392 (KLVRVLESLLVSLVTTLVVFVA). 3 N-linked (GlcNAc...) asparagine glycosylation sites follow: N410, N422, and N432. The next 2 membrane-spanning stretches (helical) occupy residues 462-481 (PITLALFFVLYFLLACWTYG) and 487-511 (GLFVPSLLCGAAFGRLVANVLKSYI). The Selectivity filter part_3 signature appears at 487–491 (GLFVP). F489 contributes to the chloride binding site. An intramembrane region (helical) is located at residues 519-533 (GTFSLIGAAALLGGV). The segment at residues 534 to 536 (VRM) is an intramembrane region (note=Loop between two helices). Positions 537–548 (TISLTVILIEST) form an intramembrane region, helical. An intramembrane region (note=Loop between two helices) is located at residues 549–552 (NEIT). A helical transmembrane segment spans residues 553 to 571 (YGLPIMITLMVAKWTGDFF). The Cytoplasmic segment spans residues 572 to 869 (NKGIYDIHVG…ARLRQHYQTI (298 aa)). Y576 contributes to the chloride binding site. The CBS 1 domain maps to 605–662 (MEPNLTYVYPHTRIQSLVSILRTTVHHAFPVVTENRGNEKEFMKGNQLISNNIKFKKS). 630–632 (HHA) lines the ATP pocket. The tract at residues 668–687 (AGEQRRRSQSMKSYPSSELR) is disordered. The segment covering 677–686 (SMKSYPSSEL) has biased composition (polar residues). Residue S773 is modified to Phosphoserine. Residues 807–868 (MNPSPFTVSP…QARLRQHYQT (62 aa)) enclose the CBS 2 domain. 849 to 852 (TRHN) is a binding site for ATP.

This sequence belongs to the chloride channel (TC 2.A.49) family. ClC-6/CLCN6 subfamily. Post-translationally, N-glycosylated on several asparagine residues.

Its subcellular location is the late endosome membrane. It carries out the reaction 2 chloride(in) + H(+)(out) = 2 chloride(out) + H(+)(in). Its function is as follows. Voltage-gated channel mediating the exchange of chloride ions against protons. Functions as antiporter and contributes to the acidification of the late endosome lumen. The CLC channel family contains both chloride channels and proton-coupled anion transporters that exchange chloride or another anion for protons. The presence of conserved gating glutamate residues is typical for family members that function as antiporters. The polypeptide is H(+)/Cl(-) exchange transporter 6 (CLCN6) (Oryctolagus cuniculus (Rabbit)).